Reading from the N-terminus, the 126-residue chain is MNQPANQFNPSSSQPVDPTVLNLTDSAAQKVRRLREEEGDSNLMLRVYVTGGGCSGFSYGFNFANELNEDDANFDNNDVTLVVDSLSYQYLQGSTVDYTEGLEGARFIVTNPNATTTCGCGSSFSI.

A disordered region spans residues 1–21 (MNQPANQFNPSSSQPVDPTVL). Iron-sulfur cluster contacts are provided by cysteine 54, cysteine 118, and cysteine 120.

Belongs to the HesB/IscA family. In terms of assembly, homodimer. Requires iron-sulfur cluster as cofactor.

Its function is as follows. Required for insertion of 4Fe-4S clusters for at least IspG. This is Iron-sulfur cluster insertion protein ErpA from Psychrobacter arcticus (strain DSM 17307 / VKM B-2377 / 273-4).